A 404-amino-acid polypeptide reads, in one-letter code: Clavilactone A biosynthesis cluster protein Y (404 aa).

Part of the gene cluster that mediates the biosynthesis of clavilactone A, a meroterpenoid that features a unique benzo-fused ten-membered carbocyclic ring unit with an alpha,beta-epoxy-gamma-lactone moiety, forming an intriguing 10/5/3 tricyclic nested skeleton. ClaR, ClaS and ClaT are sufficient to produce clavilactone A and the function of claY, if any, has still to be identified. The biosynthesis begins with the prenyltransferase claS that transfers geranyl pyrophosphate (GPP) to hydroquinone to produces geranylhydroquinon. The cytochrome P450 monooxygenase claR then catalyzes the diradical coupling reaction between the intramolecular hydroquinone and allyl moieties to form the benzo-fused ten-membered carbocyclic ring unit of wigantol. Finally the cytochrome P450 monooxygenase claT exquisitely and stereoselectively assembles the alpha,beta-epoxy-gamma-lactone moiety, producing clavilactone A via arnebinol A. The protein is Clavilactone A biosynthesis cluster protein Y of Ampulloclitocybe clavipes (Club foot).